The sequence spans 146 residues: Prefoldin subunit alpha (146 aa).

Belongs to the prefoldin alpha subunit family. In terms of assembly, heterohexamer of two alpha and four beta subunits.

It localises to the cytoplasm. Functionally, molecular chaperone capable of stabilizing a range of proteins. Seems to fulfill an ATP-independent, HSP70-like function in archaeal de novo protein folding. This Methanococcus vannielii (strain ATCC 35089 / DSM 1224 / JCM 13029 / OCM 148 / SB) protein is Prefoldin subunit alpha.